We begin with the raw amino-acid sequence, 360 residues long: Photosystem II protein D1 (360 aa).

3 helical membrane-spanning segments follow: residues 29–46, 118–133, and 142–156; these read YIGW…TATT, HFLL…EWEF, and WISV…AASA. Histidine 118 contributes to the chlorophyll a binding site. Tryptophan 126 serves as a coordination point for pheophytin a. Positions 170 and 189 each coordinate [CaMn4O5] cluster. Residues 197-218 form a helical membrane-spanning segment; the sequence is FHQLGVAGVFGGSLFSAMHGSL. Histidine 198 is a chlorophyll a binding site. Residues histidine 215 and 264–265 each bind a quinone; that span reads SF. Histidine 215 lines the Fe cation pocket. Residue histidine 272 participates in Fe cation binding. Residues 274-288 traverse the membrane as a helical segment; the sequence is FLGLWPVVGIWFTAL. [CaMn4O5] cluster contacts are provided by histidine 332, glutamate 333, aspartate 342, and alanine 344. Residues 345–360 constitute a propeptide that is removed on maturation; it reads SGESLPVALTAPAVIG.

This sequence belongs to the reaction center PufL/M/PsbA/D family. In terms of assembly, PSII is composed of 1 copy each of membrane proteins PsbA, PsbB, PsbC, PsbD, PsbE, PsbF, PsbH, PsbI, PsbJ, PsbK, PsbL, PsbM, PsbT, PsbX, PsbY, PsbZ, Psb30/Ycf12, at least 3 peripheral proteins of the oxygen-evolving complex and a large number of cofactors. It forms dimeric complexes. Requires The D1/D2 heterodimer binds P680, chlorophylls that are the primary electron donor of PSII, and subsequent electron acceptors. It shares a non-heme iron and each subunit binds pheophytin, quinone, additional chlorophylls, carotenoids and lipids. D1 provides most of the ligands for the Mn4-Ca-O5 cluster of the oxygen-evolving complex (OEC). There is also a Cl(-1) ion associated with D1 and D2, which is required for oxygen evolution. The PSII complex binds additional chlorophylls, carotenoids and specific lipids. as cofactor. Tyr-161 forms a radical intermediate that is referred to as redox-active TyrZ, YZ or Y-Z. In terms of processing, C-terminally processed by CTPA; processing is essential to allow assembly of the oxygen-evolving complex and thus photosynthetic growth.

It is found in the plastid. Its subcellular location is the chloroplast thylakoid membrane. The enzyme catalyses 2 a plastoquinone + 4 hnu + 2 H2O = 2 a plastoquinol + O2. Photosystem II (PSII) is a light-driven water:plastoquinone oxidoreductase that uses light energy to abstract electrons from H(2)O, generating O(2) and a proton gradient subsequently used for ATP formation. It consists of a core antenna complex that captures photons, and an electron transfer chain that converts photonic excitation into a charge separation. The D1/D2 (PsbA/PsbD) reaction center heterodimer binds P680, the primary electron donor of PSII as well as several subsequent electron acceptors. The polypeptide is Photosystem II protein D1 (Guillardia theta (Cryptophyte)).